A 129-amino-acid polypeptide reads, in one-letter code: Small ribosomal subunit protein uS11 (129 aa).

It belongs to the universal ribosomal protein uS11 family. In terms of assembly, part of the 30S ribosomal subunit. Interacts with proteins S7 and S18. Binds to IF-3.

Functionally, located on the platform of the 30S subunit, it bridges several disparate RNA helices of the 16S rRNA. Forms part of the Shine-Dalgarno cleft in the 70S ribosome. The sequence is that of Small ribosomal subunit protein uS11 from Phocaeicola vulgatus (strain ATCC 8482 / DSM 1447 / JCM 5826 / CCUG 4940 / NBRC 14291 / NCTC 11154) (Bacteroides vulgatus).